A 920-amino-acid polypeptide reads, in one-letter code: Urea transporter 2 (920 aa).

Positions 25 to 57 are disordered; sequence FTSPSWPSTSPDTHPALPLLEMPEEKDLRSSNE. Residues 26–39 show a composition bias toward low complexity; sequence TSPSWPSTSPDTHP. Residues 47 to 57 are compositionally biased toward basic and acidic residues; that stretch reads PEEKDLRSSNE. 9 consecutive transmembrane segments (helical) span residues 151-170, 176-196, 204-224, 233-253, 272-291, 302-322, 346-366, 370-390, and 392-412; these read WWTI…ALAL, AIAS…MAVF, WWLL…SSAL, LPVF…ATGH, ITWT…VGVG, GGVF…HAAI, WSYN…ALTW, LLAL…SNIM, and VVGV…FLLL. The tract at residues 446 to 467 is disordered; the sequence is EKAPSGGGGEHPPTAGPKVEEG. A Phosphoserine modification is found at Ser477. Transmembrane regions (helical) follow at residues 600 to 620, 638 to 658, 666 to 686, and 695 to 715; these read GILI…SGCL, AIAA…MAVF, WWLL…SSAL, and LPVF…ATGH. The N-linked (GlcNAc...) asparagine glycan is linked to Asn733. The next 4 helical transmembrane spans lie at 764–784, 803–823, 832–852, and 854–874; these read GGIF…HAAI, IYFG…GGMF, LLAI…ANML, and VFGL…FLLL.

Belongs to the urea transporter family. In terms of assembly, interacts with SNAPIN which enhances its urea transport activity. Epressed in the inner medulla of the kidney (at protein level). In terms of tissue distribution, expressed in the kidney.

Its subcellular location is the apical cell membrane. The protein localises to the cell membrane. The enzyme catalyses urea(in) = urea(out). Its activity is regulated as follows. Inhibited by phloretin. In terms of biological role, mediates the transport of urea driven by a concentration gradient across the cell membrane of the renal inner medullary collecting duct which is critical to the urinary concentrating mechanism. Functionally, mediates the transport of urea driven by a concentration gradient across the cell membrane of the kidney inner medullary collecting duct which is critical to the urinary concentrating mechanism. The protein is Urea transporter 2 (SLC14A2) of Homo sapiens (Human).